The following is a 373-amino-acid chain: DNA primase small subunit PriS (373 aa).

Catalysis depends on residues aspartate 95, aspartate 97, and aspartate 281.

This sequence belongs to the eukaryotic-type primase small subunit family. In terms of assembly, heterodimer of a small subunit (PriS) and a large subunit (PriL). It depends on Mg(2+) as a cofactor. Mn(2+) is required as a cofactor.

Catalytic subunit of DNA primase, an RNA polymerase that catalyzes the synthesis of short RNA molecules used as primers for DNA polymerase during DNA replication. The small subunit contains the primase catalytic core and has DNA synthesis activity on its own. Binding to the large subunit stabilizes and modulates the activity, increasing the rate of DNA synthesis while decreasing the length of the DNA fragments, and conferring RNA synthesis capability. The DNA polymerase activity may enable DNA primase to also catalyze primer extension after primer synthesis. May also play a role in DNA repair. This chain is DNA primase small subunit PriS, found in Nitrosopumilus maritimus (strain SCM1).